A 299-amino-acid polypeptide reads, in one-letter code: Nitrogenase iron protein (299 aa).

11–18 lines the ATP pocket; sequence GKGGIGKS. Residue Cys99 participates in [4Fe-4S] cluster binding. Position 102 is an ADP-ribosylarginine; by dinitrogenase reductase ADP-ribosyltransferase (Arg102). Cys133 is a [4Fe-4S] cluster binding site.

This sequence belongs to the NifH/BchL/ChlL family. In terms of assembly, homodimer. The cofactor is [4Fe-4S] cluster. Post-translationally, the reversible ADP-ribosylation of Arg-102 inactivates the nitrogenase reductase and regulates nitrogenase activity.

The enzyme catalyses N2 + 8 reduced [2Fe-2S]-[ferredoxin] + 16 ATP + 16 H2O = H2 + 8 oxidized [2Fe-2S]-[ferredoxin] + 2 NH4(+) + 16 ADP + 16 phosphate + 6 H(+). The key enzymatic reactions in nitrogen fixation are catalyzed by the nitrogenase complex, which has 2 components: the iron protein and the molybdenum-iron protein. The sequence is that of Nitrogenase iron protein from Methylobacterium nodulans (strain LMG 21967 / CNCM I-2342 / ORS 2060).